Here is a 225-residue protein sequence, read N- to C-terminus: Protein-L-isoaspartate O-methyltransferase (225 aa).

Ser-75 is a catalytic residue.

This sequence belongs to the methyltransferase superfamily. L-isoaspartyl/D-aspartyl protein methyltransferase family.

It localises to the cytoplasm. It carries out the reaction [protein]-L-isoaspartate + S-adenosyl-L-methionine = [protein]-L-isoaspartate alpha-methyl ester + S-adenosyl-L-homocysteine. Catalyzes the methyl esterification of L-isoaspartyl residues in peptides and proteins that result from spontaneous decomposition of normal L-aspartyl and L-asparaginyl residues. It plays a role in the repair and/or degradation of damaged proteins. The protein is Protein-L-isoaspartate O-methyltransferase of Stenotrophomonas maltophilia (strain R551-3).